We begin with the raw amino-acid sequence, 352 residues long: Galactokinase (352 aa).

Residue 14–17 coordinates substrate; the sequence is EHTD. Residues serine 46 and 96–102 contribute to the ATP site; that span reads GAGLSSS. 2 residues coordinate Mg(2+): serine 102 and glutamate 134. The active-site Proton acceptor is the aspartate 146. Tyrosine 196 contacts substrate.

It belongs to the GHMP kinase family. GalK subfamily.

The protein localises to the cytoplasm. It carries out the reaction alpha-D-galactose + ATP = alpha-D-galactose 1-phosphate + ADP + H(+). It functions in the pathway carbohydrate metabolism; galactose metabolism. Functionally, catalyzes the transfer of the gamma-phosphate of ATP to D-galactose to form alpha-D-galactose-1-phosphate (Gal-1-P). This is Galactokinase from Thermosipho africanus (strain TCF52B).